The following is a 359-amino-acid chain: D-alanine--D-alanine ligase (359 aa).

One can recognise an ATP-grasp domain in the interval 141–346; sequence KRIFKEAGLP…YSTLLDELIN (206 aa). Residue 172–227 coordinates ATP; sequence IEHLGYPCFVKPANLGSSVGITKVHNEEELPGALKLAAKYDRKLLIERGIDAREIE. Mg(2+) contacts are provided by D299, E313, and N315.

This sequence belongs to the D-alanine--D-alanine ligase family. Mg(2+) is required as a cofactor. It depends on Mn(2+) as a cofactor.

The protein localises to the cytoplasm. The catalysed reaction is 2 D-alanine + ATP = D-alanyl-D-alanine + ADP + phosphate + H(+). It functions in the pathway cell wall biogenesis; peptidoglycan biosynthesis. Its function is as follows. Cell wall formation. This Thermoanaerobacter pseudethanolicus (strain ATCC 33223 / 39E) (Clostridium thermohydrosulfuricum) protein is D-alanine--D-alanine ligase.